The sequence spans 351 residues: GTPase Obg (351 aa).

An Obg domain is found at 1-159 (MKFLDQCKIY…RWVWLRLKLI (159 aa)). The OBG-type G domain occupies 160-327 (ADAGLVGLPN…MLFELLRHIR (168 aa)). GTP contacts are provided by residues 166-173 (GLPNAGKS), 191-195 (FTTLT), 212-215 (DIPG), 279-282 (NKID), and 308-310 (SGA). Residues S173 and T193 each coordinate Mg(2+).

The protein belongs to the TRAFAC class OBG-HflX-like GTPase superfamily. OBG GTPase family. In terms of assembly, monomer. It depends on Mg(2+) as a cofactor.

It is found in the cytoplasm. Functionally, an essential GTPase which binds GTP, GDP and possibly (p)ppGpp with moderate affinity, with high nucleotide exchange rates and a fairly low GTP hydrolysis rate. Plays a role in control of the cell cycle, stress response, ribosome biogenesis and in those bacteria that undergo differentiation, in morphogenesis control. The protein is GTPase Obg of Rhodospirillum centenum (strain ATCC 51521 / SW).